Consider the following 888-residue polypeptide: MQTHEIRERFTNHFVKAGHEAVPSASLILDDPNLLFVNAGMVPFKPYFLGQQNPPFPNGTATSIQKCVRTLDIEEVGITTRHNTFFQMAGNFSFGQYFKEGAITHAWQLLTGTVAEGGLGLDPERLWVTVYLDDDEAAEIWNKKIGVPSERIQRLGMADNYWSMGIPGPCGPCSEIYYDRGPEYGAEGGPIADDNRYMEIWNLVFMENERGEGIGKDNFEIVGPLPKKNIDTGMGIERVACILQGVDNVYETDLLRPVINVAEELTGATYGTNDDDNIRFRVIADHSRTGMMLILDGVTPGNEGRGYILRRLLRRIIRSAHLLGAKGKTLEKFMNTIMDTMTPSYPEIADNRERILRVAITEEKAFLKTLASGTELFEDKADQVKNSGNKVLDGAAAFKLHDTYGFPIDLTLEMAAEAGLNVDIEGFNSLMAEQRARAKADNRAKKHGHADLSIYREWVDEHPTVFTGYDELTTDSKVLGLLSAGNKVNEIKAGEEVEVILEASPLYAEAGGQLGDRGQILMGDTVLKVNDVQKIGKKLWVHKATVAQGGLSVGDVVTAQVDSDWRHAARQAHTGTHLIHAALRQVLGPTAVQAGSMNKPGYLRFDFNYTESLTPRQLEEIQNITNQAVDSDWDVNTIETSLEEAKAMGALALFGENYGSEVRVIEVGGPFSIELCGGTHVTHSSQIGPVAILGESSVGSGVRRIEAYTGLDSFKYLAKEQALVENIASSMKVKPEELPDRIAALTQKLKDAEKAIADMRSAQLMAQATGLVAGAIEVNGVKLVAQRVSDVENMGDLRSLAADIKQRLDDVPAVVALVGEDASGKAPFVVGATKAAVSAGYKANAYAKILGQYIEGNGGGKPDMAQGSARNSSGFDQGIAAVKAEMSA.

Residues His-573, His-577, Cys-676, and His-680 each contribute to the Zn(2+) site.

Belongs to the class-II aminoacyl-tRNA synthetase family. It depends on Zn(2+) as a cofactor.

The protein resides in the cytoplasm. It carries out the reaction tRNA(Ala) + L-alanine + ATP = L-alanyl-tRNA(Ala) + AMP + diphosphate. Functionally, catalyzes the attachment of alanine to tRNA(Ala) in a two-step reaction: alanine is first activated by ATP to form Ala-AMP and then transferred to the acceptor end of tRNA(Ala). Also edits incorrectly charged Ser-tRNA(Ala) and Gly-tRNA(Ala) via its editing domain. This is Alanine--tRNA ligase from Corynebacterium diphtheriae (strain ATCC 700971 / NCTC 13129 / Biotype gravis).